The following is a 400-amino-acid chain: Ribosomal RNA large subunit methyltransferase I (400 aa).

The PUA domain occupies 6–84 (FPRLVLAKGR…NEAIDSAFFE (79 aa)).

Belongs to the methyltransferase superfamily. RlmI family.

It localises to the cytoplasm. It carries out the reaction cytidine(1962) in 23S rRNA + S-adenosyl-L-methionine = 5-methylcytidine(1962) in 23S rRNA + S-adenosyl-L-homocysteine + H(+). Its function is as follows. Specifically methylates the cytosine at position 1962 (m5C1962) of 23S rRNA. The protein is Ribosomal RNA large subunit methyltransferase I of Klebsiella pneumoniae subsp. pneumoniae (strain ATCC 700721 / MGH 78578).